The primary structure comprises 92 residues: Conotoxin Cal22f (92 aa).

The first 24 residues, 1 to 24, serve as a signal peptide directing secretion; sequence MMSTKGITLFLCLLLLALATSVNG. A propeptide spanning residues 25–44 is cleaved from the precursor; it reads GQGTRRSRMTRALHGGRPSA.

Post-translationally, contains 4 disulfide bonds. In terms of tissue distribution, expressed by the venom duct.

The protein resides in the secreted. Functionally, probable neurotoxin with unknown target. Possibly targets ion channels. This chain is Conotoxin Cal22f, found in Californiconus californicus (California cone).